A 363-amino-acid polypeptide reads, in one-letter code: ADP-ribosylhydrolase ARH3 (363 aa).

Glu41 is a Mg(2+) binding site. Position 64 is a phosphothreonine (Thr64). Mg(2+) contacts are provided by Thr76, Asp77, and Asp78. Position 77 (Asp77) interacts with substrate. Residues 146-152 (KGSYGNG), His182, Leu235, and Ile271 contribute to the substrate site. Mg(2+)-binding residues include Asp314, Asp316, and Thr317.

The protein belongs to the ADP-ribosylglycohydrolase family. Monomer. Requires Mg(2+) as cofactor. In terms of tissue distribution, ubiquitous. Expressed in skin fibroblasts.

It is found in the nucleus. Its subcellular location is the cytoplasm. It localises to the chromosome. The protein resides in the mitochondrion matrix. It carries out the reaction [(1''-&gt;2')-ADP-alpha-D-ribose](n) + H2O = [(1''-&gt;2')-ADP-alpha-D-ribose](n-1) + ADP-D-ribose. The enzyme catalyses 1''-O-acetyl-ADP-alpha-D-ribose + H2O = ADP-D-ribose + acetate + H(+). The catalysed reaction is O-(ADP-D-ribosyl)-L-seryl-[protein] + H2O = ADP-D-ribose + L-seryl-[protein]. It catalyses the reaction alpha-NAD(+) + H2O = ADP-D-ribose + nicotinamide + H(+). With respect to regulation, the protein undergoes a dramatic conformational switch from closed to open states upon substrate-binding, which enables specific substrate recognition for the 1''-O-linkage. The glutamate flap (Glu-41) blocks substrate entrance to Mg(2+) in the unliganded closed state. In presence of substrate, Glu-41 is ejected from the active site: this closed-to-open transition significantly widens the substrate-binding channel and precisely positions the scissile 1''-O-linkage for cleavage while securing tightly 2'- and 3'-hydroxyls of ADP-ribose. Functionally, ADP-ribosylhydrolase that preferentially hydrolyzes the scissile alpha-O-linkage attached to the anomeric C1'' position of ADP-ribose and acts on different substrates, such as proteins ADP-ribosylated on serine and threonine, free poly(ADP-ribose) and O-acetyl-ADP-D-ribose. Specifically acts as a serine mono-ADP-ribosylhydrolase by mediating the removal of mono-ADP-ribose attached to serine residues on proteins, thereby playing a key role in DNA damage response. Serine ADP-ribosylation of proteins constitutes the primary form of ADP-ribosylation of proteins in response to DNA damage. Does not hydrolyze ADP-ribosyl-arginine, -cysteine, -diphthamide, or -asparagine bonds. Also able to degrade protein free poly(ADP-ribose), which is synthesized in response to DNA damage: free poly(ADP-ribose) acts as a potent cell death signal and its degradation by ADPRHL2 protects cells from poly(ADP-ribose)-dependent cell death, a process named parthanatos. Also hydrolyzes free poly(ADP-ribose) in mitochondria. Specifically digests O-acetyl-ADP-D-ribose, a product of deacetylation reactions catalyzed by sirtuins. Specifically degrades 1''-O-acetyl-ADP-D-ribose isomer, rather than 2''-O-acetyl-ADP-D-ribose or 3''-O-acetyl-ADP-D-ribose isomers. This chain is ADP-ribosylhydrolase ARH3, found in Homo sapiens (Human).